The chain runs to 309 residues: Foldase protein PrsA (309 aa).

The first 22 residues, Met1 to Ala22, serve as a signal peptide directing secretion. Cys23 carries the N-palmitoyl cysteine lipid modification. Cys23 carries the S-diacylglycerol cysteine lipid modification. Residues Thr146–Asp241 form the PpiC domain.

The protein belongs to the PrsA family.

The protein localises to the cell membrane. It carries out the reaction [protein]-peptidylproline (omega=180) = [protein]-peptidylproline (omega=0). Plays a major role in protein secretion by helping the post-translocational extracellular folding of several secreted proteins. The polypeptide is Foldase protein PrsA (Streptococcus agalactiae serotype Ia (strain ATCC 27591 / A909 / CDC SS700)).